Here is a 110-residue protein sequence, read N- to C-terminus: Probable ribonuclease HepT (110 aa).

Catalysis depends on residues Arg-75 and His-80. Positions 75-82 (RDKLIHAY) match the RX(4)HXY motif motif. Tyr-82 is modified (O-di-AMP-tyrosine).

The protein belongs to the HepT RNase toxin family. Modified by cognate antitoxin MntA; probably at least 2 successive AMPylation events occur on Tyr-82.

Its function is as follows. Toxic component of a type VII toxin-antitoxin (TA) system. Overexpression in E.coli inhibits cell growth. Neutralized by cognate antitoxin MntA. Neutralization is probably due to AMPylation by MntA. Probably an RNAase. The chain is Probable ribonuclease HepT from Thermococcus cleftensis (strain DSM 27260 / KACC 17922 / CL1).